The following is a 1597-amino-acid chain: Collagen alpha-1(XVII) chain (1597 aa).

Disordered regions lie at residues 1 to 155 (MDVT…PSTR) and 168 to 188 (GSRS…PIPK). Residues 1-468 (MDVTKKNKRD…CGSCCSWWKW (468 aa)) are Cytoplasmic-facing. The segment at 1–567 (MDVTKKNKRD…AEQENGNLRG (567 aa)) is nonhelical region (NC16A). Positions 9 to 19 (RDGSEVTERII) are enriched in basic and acidic residues. 3 stretches are compositionally biased toward polar residues: residues 58–96 (THGS…SPGS), 111–120 (EGSSSGNSSP), and 170–184 (RSAS…SNTL). The necessary for interaction with DST and for the recruitment of DST to hemidesmosome stretch occupies residues 146-231 (RLQSASPSTR…WSSTLPAGSS (86 aa)). A helical; Signal-anchor for type II membrane protein transmembrane segment spans residues 469 to 489 (LLGLLLTWLLLLGLLFGLIAL). Topologically, residues 490 to 1597 (AEEVRALKAR…KGGSWRLTSY (1108 aa)) are extracellular. 5 disordered regions span residues 562-857 (NGNL…SSSS), 907-927 (LRGP…FRVR), 970-1041 (LETY…ISSS), 1289-1316 (TAGV…VSGA), and 1344-1394 (FIVG…SSMG). Residues 568–1572 (SPGPKGDMGS…ELPLEEQPLA (1005 aa)) form a triple-helical region region. Over residues 604 to 632 (PKGQKGSVGEPGMEGPMGQRGREGPMGPR) the composition is skewed to low complexity. A compositionally biased stretch (gly residues) spans 665 to 674 (GPKGSGGSPG). Low complexity-rich tracts occupy residues 730 to 748 (PGAV…AGPD) and 774 to 796 (DPGK…PGRP). Residues 820 to 838 (PGPPGPPGAMGPPGPPGAP) are compositionally biased toward pro residues. Residues 847–857 (AGESFMGSSSS) are compositionally biased toward low complexity. 5 stretches are compositionally biased toward pro residues: residues 910–922 (PPGP…PPDL), 977–986 (PPGPPGPPGP), 1023–1035 (PGPP…PGPP), 1296–1310 (PGPP…PRGP), and 1348–1357 (PPGPPGPQGP). Over residues 1377–1393 (SSHSASVSRGSSYSSSM) the composition is skewed to low complexity. An N-linked (GlcNAc...) asparagine glycan is attached at asparagine 1493. The interval 1531–1566 (GHPALEGTREKKETKVTKSMRGGEREASPSSHELPL) is disordered. Over residues 1537-1557 (GTREKKETKVTKSMRGGEREA) the composition is skewed to basic and acidic residues. The interval 1573-1597 (SVLAMAYGVHVKISPKGGSWRLTSY) is nonhelical region (NC1).

In terms of assembly, homotrimers of alpha 1(XVII)chains. Interacts (via cytoplasmic region) with ITGB4 (via cytoplasmic region). Interacts (via cytoplasmic region) with DST (via N-terminus). Interacts (via N-terminus) with PLEC. Interacts (via cytoplasmic region) with DSP. Post-translationally, the intracellular/endo domain is disulfide-linked. Prolines at the third position of the tripeptide repeating unit (G-X-Y) are hydroxylated in some or all of the chains. In terms of processing, the ectodomain is shedded from the surface of keratinocytes resulting in a 120-kDa soluble form, also named as 120 kDa linear IgA disease antigen homolog. The shedding is mediated by membrane-bound metalloproteases. In terms of tissue distribution, upper lamina lucidalhemidesmosome.

It is found in the cell junction. Its subcellular location is the hemidesmosome. The protein resides in the membrane. The protein localises to the secreted. It localises to the extracellular space. It is found in the extracellular matrix. Its subcellular location is the basement membrane. In terms of biological role, the 120 kDa linear IgA disease antigen homolog is an anchoring filament component involved in dermal-epidermal cohesion. The sequence is that of Collagen alpha-1(XVII) chain (COL17A1) from Canis lupus familiaris (Dog).